Reading from the N-terminus, the 483-residue chain is Proline--tRNA ligase (483 aa).

It belongs to the class-II aminoacyl-tRNA synthetase family. ProS type 3 subfamily. As to quaternary structure, homodimer.

It localises to the cytoplasm. The enzyme catalyses tRNA(Pro) + L-proline + ATP = L-prolyl-tRNA(Pro) + AMP + diphosphate. In terms of biological role, catalyzes the attachment of proline to tRNA(Pro) in a two-step reaction: proline is first activated by ATP to form Pro-AMP and then transferred to the acceptor end of tRNA(Pro). The sequence is that of Proline--tRNA ligase from Mycoplasma genitalium (strain ATCC 33530 / DSM 19775 / NCTC 10195 / G37) (Mycoplasmoides genitalium).